Consider the following 531-residue polypeptide: Tubulin-folding cofactor E (531 aa).

Residues 32-76 (GDVEGYSGTWIGVDWDQDGDGKHNGSVNGVFYFNGRSQSSASFVR) form the CAP-Gly domain. LRR repeat units lie at residues 84–109 (ITLL…MYVL), 159–183 (LPNL…ALCE), 185–213 (LPAL…NIRV), 233–256 (LPGI…SSSD), 260–284 (FNSL…KLSQ), 285–308 (LPCL…VNGT), 318–342 (FPSL…ALNG), 344–366 (PQLV…GVPR), and 474–497 (VGKL…LFLQ).

The protein belongs to the TBCE family. Supercomplex made of cofactors A to E. Cofactors A and D function by capturing and stabilizing tubulin in a quasi-native conformation. Cofactor E binds to the cofactor D-tubulin complex; interaction with cofactor C then causes the release of tubulin polypeptides that are committed to the native state.

Its subcellular location is the cytoplasm. Functionally, essential tubulin-folding protein involved in the tubulin folding pathway. Not essential for cell viability. Probably involved in the binding of alpha-tubulin in the multimeric supercomplex. This Arabidopsis thaliana (Mouse-ear cress) protein is Tubulin-folding cofactor E (TFCE).